The following is a 253-amino-acid chain: Ubiquinone biosynthesis O-methyltransferase (253 aa).

Residues arginine 47, glycine 78, aspartate 99, and methionine 141 each coordinate S-adenosyl-L-methionine.

It belongs to the methyltransferase superfamily. UbiG/COQ3 family.

The enzyme catalyses a 3-demethylubiquinol + S-adenosyl-L-methionine = a ubiquinol + S-adenosyl-L-homocysteine + H(+). It catalyses the reaction a 3-(all-trans-polyprenyl)benzene-1,2-diol + S-adenosyl-L-methionine = a 2-methoxy-6-(all-trans-polyprenyl)phenol + S-adenosyl-L-homocysteine + H(+). The protein operates within cofactor biosynthesis; ubiquinone biosynthesis. Its function is as follows. O-methyltransferase that catalyzes the 2 O-methylation steps in the ubiquinone biosynthetic pathway. In Bradyrhizobium sp. (strain ORS 278), this protein is Ubiquinone biosynthesis O-methyltransferase.